Consider the following 552-residue polypeptide: Phosphoglucomutase (552 aa).

Serine 143 (phosphoserine intermediate) is an active-site residue. 4 residues coordinate Mg(2+): serine 143, aspartate 295, aspartate 297, and aspartate 299.

Belongs to the phosphohexose mutase family. The cofactor is Mg(2+).

The catalysed reaction is alpha-D-glucose 1-phosphate = alpha-D-glucose 6-phosphate. It participates in glycolipid metabolism; diglucosyl-diacylglycerol biosynthesis. Catalyzes the interconversion between glucose-6-phosphate and alpha-glucose-1-phosphate. This is the first step in the biosynthesis of diglucosyl-diacylglycerol (Glc2-DAG), i.e. the predominant glycolipid found in the S.aureus membrane, which is also used as a membrane anchor for lipoteichoic acid (LTA). The polypeptide is Phosphoglucomutase (pgcA) (Staphylococcus aureus (strain USA300)).